A 408-amino-acid polypeptide reads, in one-letter code: Argininosuccinate synthase (408 aa).

Residue 14–22 (AYSGGLDTS) coordinates ATP. Residues Tyr92 and Ser97 each contribute to the L-citrulline site. An ATP-binding site is contributed by Gly122. L-aspartate-binding residues include Thr124, Asn128, and Asp129. Asn128 is an L-citrulline binding site. L-citrulline-binding residues include Arg132, Ser181, Ser190, Glu266, and Tyr278.

It belongs to the argininosuccinate synthase family. Type 1 subfamily. As to quaternary structure, homotetramer.

It localises to the cytoplasm. The catalysed reaction is L-citrulline + L-aspartate + ATP = 2-(N(omega)-L-arginino)succinate + AMP + diphosphate + H(+). Its pathway is amino-acid biosynthesis; L-arginine biosynthesis; L-arginine from L-ornithine and carbamoyl phosphate: step 2/3. The polypeptide is Argininosuccinate synthase (Moorella thermoacetica (strain ATCC 39073 / JCM 9320)).